The sequence spans 365 residues: tRNA/tmRNA (uracil-C(5))-methyltransferase (365 aa).

Positions 196, 224, 229, 245, and 298 each coordinate S-adenosyl-L-methionine. The active-site Nucleophile is Cys-323. Glu-357 serves as the catalytic Proton acceptor.

It belongs to the class I-like SAM-binding methyltransferase superfamily. RNA M5U methyltransferase family. TrmA subfamily.

It carries out the reaction uridine(54) in tRNA + S-adenosyl-L-methionine = 5-methyluridine(54) in tRNA + S-adenosyl-L-homocysteine + H(+). The enzyme catalyses uridine(341) in tmRNA + S-adenosyl-L-methionine = 5-methyluridine(341) in tmRNA + S-adenosyl-L-homocysteine + H(+). In terms of biological role, dual-specificity methyltransferase that catalyzes the formation of 5-methyluridine at position 54 (m5U54) in all tRNAs, and that of position 341 (m5U341) in tmRNA (transfer-mRNA). This is tRNA/tmRNA (uracil-C(5))-methyltransferase from Nautilia profundicola (strain ATCC BAA-1463 / DSM 18972 / AmH).